The primary structure comprises 92 residues: MNEEYWILEVKVTPKSRENKIVGFEGEVLKIRVTEAPEKGKANEAVIALLAKTLSLPKRDVTLISGETSRKKRLLLPKSTESIISHWREHGL.

Belongs to the UPF0235 family.

The chain is UPF0235 protein CCA_00247 from Chlamydia caviae (strain ATCC VR-813 / DSM 19441 / 03DC25 / GPIC) (Chlamydophila caviae).